The primary structure comprises 268 residues: Small ribosomal subunit protein eS1 (268 aa).

A disordered region spans residues 1–21; it reads MAVGKNKGLSKGGKKGGKKKV.

This sequence belongs to the eukaryotic ribosomal protein eS1 family. In terms of assembly, component of the small ribosomal subunit. Mature ribosomes consist of a small (40S) and a large (60S) subunit. The 40S subunit contains about 33 different proteins and 1 molecule of RNA (18S). The 60S subunit contains about 49 different proteins and 3 molecules of RNA (28S, 5.8S and 5S).

It is found in the cytoplasm. In terms of biological role, essential for oogenesis; required for late follicle cell development. This chain is Small ribosomal subunit protein eS1, found in Drosophila virilis (Fruit fly).